The following is a 301-amino-acid chain: uncharacterized protein (301 aa).

A signal peptide spans 1–22 (MPGRFTVALVIALGGTCGVADA). One can recognise a GP-PDE domain in the interval 31 to 300 (PMIVAHRAGT…DSPLAAQQWR (270 aa)).

This is an uncharacterized protein from Mycobacterium tuberculosis (strain ATCC 25618 / H37Rv).